The chain runs to 467 residues: Iroquois-class homeodomain protein irx-1-A (467 aa).

The segment at residues 126-188 (DPGRPKNATR…NARRRLKKEN (63 aa)) is a DNA-binding region (homeobox; TALE-type). Disordered stretches follow at residues 197–306 (KEDD…PPHS), 318–344 (TSPD…QHPA), and 410–467 (SLSS…LPSA). Acidic residues-rich tracts occupy residues 215-225 (EDDEEIDLESI) and 233-244 (NDGEQSNEEEDE). Over residues 245-262 (KLEHLRQGEKESLKKESE) the composition is skewed to basic and acidic residues. Over residues 415-431 (KTPERTSPKHSDRENVP) the composition is skewed to basic and acidic residues. Polar residues predominate over residues 447–460 (RENTLSQQEGTSRI).

The protein belongs to the TALE/IRO homeobox family. In terms of tissue distribution, expressed early in neural differentiation in the neural plate, and expression continues in the neural tube after neural fold closure. Expressed in the presumptive midbrain territory. Also expressed in the prospective neural crest and the preplacodal field, anterior to the neural plate. Strongly expressed in the profundal placode and weakly expressed in the trigeminal placode. Also expressed in the mesoderm in the Spemann organizer from the start of gastrulation, and subsequently in its derivatives; namely in the notochord as well as in the somites of stage 25 embryos, and the somites and notochord of tailbud embryos. Also expressed in specific and overlapping dynamic patterns with irx2 and irx3 during pronephric kidney development. Renal expression begins in the dorsal region of the pronephric anlage at mid neurula stage and continues to at least tailbud stages where expression is confined to the intermediate tubule segment IT1. Renal expression is maintained at tadpole stages.

It localises to the nucleus. Acts partially redundantly with other irx members in neural patterning. Required for formation of the posterior forebrain, midbrain, hindbrain, and to a lesser extent, spinal cord. Acts early in neural plate development to induce expression of some but not all proneural genes, and specify a neural precursor state. Also up-regulates repressors that prevent neuronal differentiation. Patterns the neuroectoderm in both the anterior/posterior and dorsal/ventral axes. Acts primarily as a transcriptional repressor during neural development, and binds to the bmp4 promoter to repress gene expression and thus mediate down-regulation of bmp4 by wnt signaling. Controls multiple processes through bmp4-repression including neural plate development, neural crest specification and Spemann organizer development. Involved in the specification of the preplacodal field at the anterior border of the neural plate. Regulates the genetic cascade of interactions that are necessary for positioning the isthmus organizer and the formation of the midbrain-hindbrain boundary. Required during at least two stages of pronephros kidney development; during neurula stages, maintains transcription of key renal genes to define the size and identity of the pronephric anlage, probably in part through regulation of bmp-signaling. Subsequently required for proper formation of the intermediate tubule segment of the pronephros. Acts principally as a transcriptional activator during pronephros development. The protein is Iroquois-class homeodomain protein irx-1-A (irx1-a) of Xenopus laevis (African clawed frog).